The chain runs to 301 residues: General transcription and DNA repair factor IIH subunit TFB4 (301 aa).

The segment at 259-276 (CSVCLSIFCEHHKKCSTC) adopts a C4-type zinc-finger fold.

It belongs to the TFB4 family. Component of the 7-subunit TFIIH core complex composed of XPB, XPD, TFB1/GTF2H1, GTF2H2/P44, TFB4/GTF2H3, TFB2/GTF2H4 and TFB5/GTF2H5, which is active in NER. The core complex associates with the 3-subunit CDK-activating kinase (CAK) module composed of CYCH1/cyclin H1, CDKD and MAT1/At4g30820 to form the 10-subunit holoenzyme (holo-TFIIH) active in transcription.

It localises to the nucleus. Functionally, component of the general transcription and DNA repair factor IIH (TFIIH) core complex, which is involved in general and transcription-coupled nucleotide excision repair (NER) of damaged DNA and, when complexed to CAK, in RNA transcription by RNA polymerase II. In NER, TFIIH acts by opening DNA around the lesion to allow the excision of the damaged oligonucleotide and its replacement by a new DNA fragment. In transcription, TFIIH has an essential role in transcription initiation. When the pre-initiation complex (PIC) has been established, TFIIH is required for promoter opening and promoter escape. Phosphorylation of the C-terminal tail (CTD) of the largest subunit of RNA polymerase II by the kinase module CAK controls the initiation of transcription. The chain is General transcription and DNA repair factor IIH subunit TFB4 from Arabidopsis thaliana (Mouse-ear cress).